The primary structure comprises 355 residues: Uroporphyrinogen decarboxylase (355 aa).

Substrate-binding positions include 27-31, aspartate 77, tyrosine 154, threonine 209, and histidine 328; that span reads RQAGR.

The protein belongs to the uroporphyrinogen decarboxylase family. Homodimer.

Its subcellular location is the cytoplasm. The enzyme catalyses uroporphyrinogen III + 4 H(+) = coproporphyrinogen III + 4 CO2. Its pathway is porphyrin-containing compound metabolism; protoporphyrin-IX biosynthesis; coproporphyrinogen-III from 5-aminolevulinate: step 4/4. Its function is as follows. Catalyzes the decarboxylation of four acetate groups of uroporphyrinogen-III to yield coproporphyrinogen-III. In Aliivibrio salmonicida (strain LFI1238) (Vibrio salmonicida (strain LFI1238)), this protein is Uroporphyrinogen decarboxylase.